Consider the following 161-residue polypeptide: Effector CFEM5 (161 aa).

Positions Met1 to Ala23 are cleaved as a signal peptide. The CFEM domain maps to Val24–Ala126. Disulfide bonds link Cys46/Cys78, Cys56/Cys63, and Cys65/Cys100. Heme is bound at residue Asp60.

It belongs to the RBT5 family. As to quaternary structure, interacts with Z.mays LRR5; the interaction is direct. Interacts with Z.mays WAK17 isoform 2; the interaction is direct.

It localises to the membrane. It is found in the secreted. In terms of biological role, suppresses host programmed cell death during infection by binding to Z.mays WAK17 isoform 2 and Z.mays LRR5, to prevent activation of Z.mays WAK17 isoform 1 and the downstream hypersensitive response. This Gibberella zeae (strain ATCC MYA-4620 / CBS 123657 / FGSC 9075 / NRRL 31084 / PH-1) (Wheat head blight fungus) protein is Effector CFEM5.